Here is a 110-residue protein sequence, read N- to C-terminus: Phosphoribosyl-ATP pyrophosphatase (110 aa).

It belongs to the PRA-PH family.

It localises to the cytoplasm. The enzyme catalyses 1-(5-phospho-beta-D-ribosyl)-ATP + H2O = 1-(5-phospho-beta-D-ribosyl)-5'-AMP + diphosphate + H(+). It participates in amino-acid biosynthesis; L-histidine biosynthesis; L-histidine from 5-phospho-alpha-D-ribose 1-diphosphate: step 2/9. The polypeptide is Phosphoribosyl-ATP pyrophosphatase (Teredinibacter turnerae (strain ATCC 39867 / T7901)).